Here is a 652-residue protein sequence, read N- to C-terminus: DNA ligase (652 aa).

NAD(+) is bound by residues 29–33 (DSDYD), 78–79 (SL), and Glu-107. The active-site N6-AMP-lysine intermediate is Lys-109. Positions 130, 164, 278, and 302 each coordinate NAD(+). Positions 395, 398, 413, and 418 each coordinate Zn(2+). In terms of domain architecture, BRCT spans 577–652 (NSDAALFGLT…IEDEDWLRQL (76 aa)).

The protein belongs to the NAD-dependent DNA ligase family. LigA subfamily. It depends on Mg(2+) as a cofactor. Mn(2+) is required as a cofactor.

It carries out the reaction NAD(+) + (deoxyribonucleotide)n-3'-hydroxyl + 5'-phospho-(deoxyribonucleotide)m = (deoxyribonucleotide)n+m + AMP + beta-nicotinamide D-nucleotide.. In terms of biological role, DNA ligase that catalyzes the formation of phosphodiester linkages between 5'-phosphoryl and 3'-hydroxyl groups in double-stranded DNA using NAD as a coenzyme and as the energy source for the reaction. It is essential for DNA replication and repair of damaged DNA. The sequence is that of DNA ligase from Streptococcus pyogenes serotype M4 (strain MGAS10750).